The sequence spans 245 residues: Uridylate kinase (245 aa).

20–23 (KLSG) serves as a coordination point for ATP. G60 is a binding site for UMP. ATP is bound by residues G61 and R65. UMP contacts are provided by residues D80 and 141 to 148 (AGLPYFST). The ATP site is built by Y175 and D178.

This sequence belongs to the UMP kinase family. Homohexamer.

The protein resides in the cytoplasm. It catalyses the reaction UMP + ATP = UDP + ADP. The protein operates within pyrimidine metabolism; CTP biosynthesis via de novo pathway; UDP from UMP (UMPK route): step 1/1. With respect to regulation, inhibited by UTP. In terms of biological role, catalyzes the reversible phosphorylation of UMP to UDP. This chain is Uridylate kinase, found in Arthrobacter sp. (strain FB24).